A 471-amino-acid chain; its full sequence is 6-phosphofructo-2-kinase/fructose-2,6-bisphosphatase 1 (471 aa).

S2 is subject to N-acetylserine. The 6-phosphofructo-2-kinase stretch occupies residues 2-250; that stretch reads SPEMGELTQT…VYYLMNIHVT (249 aa). S33 carries the post-translational modification Phosphoserine; by PKA. Position 49-57 (49-57) interacts with ATP; sequence GLPARGKTY. R82 and R105 together coordinate beta-D-fructose 6-phosphate. D131 is a catalytic residue. Positions 133 and 139 each coordinate beta-D-fructose 6-phosphate. At S141 the chain carries Phosphoserine. Residue C161 is part of the active site. ATP is bound at residue 170-175; it reads NIRQVK. Residues K175, R196, and Y200 each coordinate beta-D-fructose 6-phosphate. The tract at residues 251–471 is fructose-2,6-bisphosphatase; the sequence is PRSIYLCRHG…EALDTVPAHY (221 aa). R258 contacts beta-D-fructose 2,6-bisphosphate. H259 functions as the Tele-phosphohistidine intermediate in the catalytic mechanism. Beta-D-fructose 2,6-bisphosphate-binding residues include N265, G271, and R308. E328 functions as the Proton donor/acceptor in the catalytic mechanism. The beta-D-fructose 2,6-bisphosphate site is built by Y339, R353, K357, Y368, Q394, and R398. 350–353 contacts ATP; it reads FALR. Residues 394-398 and Y430 each bind ATP; that span reads QAVMR.

The protein in the C-terminal section; belongs to the phosphoglycerate mutase family. Homodimer. In terms of tissue distribution, liver.

The catalysed reaction is beta-D-fructose 2,6-bisphosphate + H2O = beta-D-fructose 6-phosphate + phosphate. It catalyses the reaction beta-D-fructose 6-phosphate + ATP = beta-D-fructose 2,6-bisphosphate + ADP + H(+). With respect to regulation, phosphorylation at Ser-33 inhibits the kinase and activates the bisphosphatase. Functionally, synthesis and degradation of fructose 2,6-bisphosphate. The sequence is that of 6-phosphofructo-2-kinase/fructose-2,6-bisphosphatase 1 from Homo sapiens (Human).